The following is a 469-amino-acid chain: 1-aminocyclopropane-1-carboxylate synthase 3 (469 aa).

Lys-272 carries the N6-(pyridoxal phosphate)lysine modification. Residues 432-452 (APNATNHQNQQQSNANSKKKS) form a disordered region. The span at 437–447 (NHQNQQQSNAN) shows a compositional bias: low complexity.

Belongs to the class-I pyridoxal-phosphate-dependent aminotransferase family. In terms of assembly, homodimer. Pyridoxal 5'-phosphate serves as cofactor.

The catalysed reaction is S-adenosyl-L-methionine = 1-aminocyclopropane-1-carboxylate + S-methyl-5'-thioadenosine + H(+). It functions in the pathway alkene biosynthesis; ethylene biosynthesis via S-adenosyl-L-methionine; ethylene from S-adenosyl-L-methionine: step 1/2. Its function is as follows. Catalyzes the formation of 1-aminocyclopropane-1-carboxylate, a direct precursor of ethylene in higher plants. The sequence is that of 1-aminocyclopropane-1-carboxylate synthase 3 (ACS3) from Solanum lycopersicum (Tomato).